Reading from the N-terminus, the 370-residue chain is Lysophosphatidic acid receptor 4 (370 aa).

Residues 1 to 43 are Extracellular-facing; it reads MGDRRFIDFQFQDSNSSLRPRLGNATANNTCIVDDSFKYNLNG. N-linked (GlcNAc...) asparagine glycosylation is found at Asn-15, Asn-24, and Asn-28. The chain crosses the membrane as a helical span at residues 44–64; it reads AVYSVVFILGLITNSVSLFVF. The Cytoplasmic segment spans residues 65-73; sequence CFRMKMRSE. Residues 74-94 form a helical membrane-spanning segment; it reads TAIFITNLAVSDLLFVCTLPF. The Extracellular portion of the chain corresponds to 95 to 112; it reads KIFYNFNRHWPFGDTLCK. A disulfide bridge connects residues Cys-111 and Cys-188. The chain crosses the membrane as a helical span at residues 113-133; it reads ISGTAFLTNIYGSMLFLTCIS. The Cytoplasmic portion of the chain corresponds to 134 to 155; it reads VDRFLAIVYPFRSRTIRTRRNS. Residues 156-176 form a helical membrane-spanning segment; sequence AIVCAGVWILVLSGGISASLF. Residues 177–203 are Extracellular-facing; that stretch reads STTNVNNATTTCFEGFSKRVWKTYLSK. An N-linked (GlcNAc...) asparagine glycan is attached at Asn-183. Residues 204 to 224 traverse the membrane as a helical segment; it reads ITIFIEVVGFIIPLILNVSCS. At 225–254 the chain is on the cytoplasmic side; sequence SVVLRTLRKPATLSQIGTNKKKVLKMITVH. Residues 255–275 form a helical membrane-spanning segment; that stretch reads MAVFVVCFVPYNSVLFLYALV. The Extracellular portion of the chain corresponds to 276–294; that stretch reads RSQAITNCFLERFAKIMYP. Residues 295 to 315 form a helical membrane-spanning segment; the sequence is ITLCLATLNCCFDPFIYYFTL. Topologically, residues 316–370 are cytoplasmic; sequence ESFQKSFYINAHIRMESLFKTETPLTTKPSLPAIQEEVSDQTTNNGGELMLESTF.

It belongs to the G-protein coupled receptor 1 family. High expression in ovary. Not detected in the brain regions thalamus, putamen, caudate, frontal cortex, pons, hypothalamus and hippocampus.

Its subcellular location is the cell membrane. Its function is as follows. Receptor for lysophosphatidic acid (LPA), a mediator of diverse cellular activities. Transduces a signal by increasing the intracellular calcium ions and by stimulating adenylyl cyclase activity. The rank order of potency for agonists of this receptor is 1-oleoyl- &gt; 1-stearoyl- &gt; 1-palmitoyl- &gt; 1-myristoyl- &gt; 1-alkyl- &gt; 1-alkenyl-LPA. The polypeptide is Lysophosphatidic acid receptor 4 (LPAR4) (Homo sapiens (Human)).